The sequence spans 97 residues: Co-chaperonin GroES (97 aa).

Belongs to the GroES chaperonin family. In terms of assembly, heptamer of 7 subunits arranged in a ring. Interacts with the chaperonin GroEL.

It is found in the cytoplasm. Functionally, together with the chaperonin GroEL, plays an essential role in assisting protein folding. The GroEL-GroES system forms a nano-cage that allows encapsulation of the non-native substrate proteins and provides a physical environment optimized to promote and accelerate protein folding. GroES binds to the apical surface of the GroEL ring, thereby capping the opening of the GroEL channel. This Stutzerimonas stutzeri (Pseudomonas stutzeri) protein is Co-chaperonin GroES.